The chain runs to 191 residues: MFDIGFSELFLILVIGLLVLGPKRLPVAIRTVMGWVATIRGLASNVQNELKQELKLQELQESIKKAEELNFQQLSPELSKTVEELKASAEKMRTALEQKAAATNTTLEEQIKEIKNATESTSQTLTEQLTPSEQVTEATTDDVLSPAEQAELAEENDEMVYIQQYYPDDDDEPVFASKVKPQTEEIQDKKA.

The chain crosses the membrane as a helical span at residues methionine 1 to glycine 21. The segment covering glutamate 119–alanine 138 has biased composition (polar residues). Disordered regions lie at residues glutamate 119–threonine 139 and aspartate 168–alanine 191. Basic and acidic residues predominate over residues proline 181–alanine 191.

Belongs to the TatB family. In terms of assembly, the Tat system comprises two distinct complexes: a TatABC complex, containing multiple copies of TatA, TatB and TatC subunits, and a separate TatA complex, containing only TatA subunits. Substrates initially bind to the TatABC complex, which probably triggers association of the separate TatA complex to form the active translocon.

The protein localises to the cell inner membrane. Its function is as follows. Part of the twin-arginine translocation (Tat) system that transports large folded proteins containing a characteristic twin-arginine motif in their signal peptide across membranes. Together with TatC, TatB is part of a receptor directly interacting with Tat signal peptides. TatB may form an oligomeric binding site that transiently accommodates folded Tat precursor proteins before their translocation. This Pasteurella multocida (strain Pm70) protein is Sec-independent protein translocase protein TatB.